Reading from the N-terminus, the 415-residue chain is Beta-1,4-glucuronyltransferase 1 (415 aa).

The Cytoplasmic portion of the chain corresponds to 1–8; it reads MQMSYAIR. A helical; Signal-anchor for type II membrane protein transmembrane segment spans residues 9-36; the sequence is CAFYQLLLAALMLVAMLQLLYLSLLSGL. Residues 37-415 are Lumenal-facing; sequence HGQEEQDQYF…AKYPNSPRRC (379 aa). Asn204 is a glycosylation site (N-linked (GlcNAc...) asparagine). Mn(2+)-binding residues include Asp227 and Asp229. Asn300 is a glycosylation site (N-linked (GlcNAc...) asparagine).

Belongs to the glycosyltransferase 49 family. Interacts with LARGE1 and LARGE2. Mn(2+) is required as a cofactor.

It is found in the golgi apparatus membrane. The enzyme catalyses 3-O-[beta-D-Xyl-(1-&gt;4)-Rib-ol-P-Rib-ol-P-3-beta-D-GalNAc-(1-&gt;3)-beta-D-GlcNAc-(1-&gt;4)-(O-6-P-alpha-D-Man)]-Thr-[protein] + UDP-alpha-D-glucuronate = 3-O-[beta-D-GlcA-(1-&gt;3)-beta-D-Xyl-(1-&gt;4)-Rib-ol-P-Rib-ol-P-3-beta-D-GalNAc-(1-&gt;3)-beta-D-GlcNAc-(1-&gt;4)-(O-6-P-alpha-D-Man)]-Thr-[protein] + UDP + H(+). It participates in protein modification; protein glycosylation. Its function is as follows. Beta-1,4-glucuronyltransferase involved in O-mannosylation of alpha-dystroglycan (DAG1). Transfers a glucuronic acid (GlcA) residue onto a xylose (Xyl) acceptor to produce the glucuronyl-beta-1,4-xylose-beta disaccharide primer, which is further elongated by LARGE1, during synthesis of phosphorylated O-mannosyl glycan. Phosphorylated O-mannosyl glycan is a carbohydrate structure present in alpha-dystroglycan (DAG1), which is required for binding laminin G-like domain-containing extracellular proteins with high affinity. Required for axon guidance; via its function in O-mannosylation of alpha-dystroglycan (DAG1). In Pongo abelii (Sumatran orangutan), this protein is Beta-1,4-glucuronyltransferase 1.